Consider the following 319-residue polypeptide: 1-aminocyclopropane-1-carboxylate oxidase (319 aa).

The Fe2OG dioxygenase domain maps to 153 to 253; sequence PTFGTKVSNY…RMSIASFYNP (101 aa). Fe cation is bound by residues histidine 177, aspartate 179, and histidine 234.

This sequence belongs to the iron/ascorbate-dependent oxidoreductase family. Fe cation serves as cofactor.

It carries out the reaction 1-aminocyclopropane-1-carboxylate + L-ascorbate + O2 = ethene + L-dehydroascorbate + hydrogen cyanide + CO2 + 2 H2O. It functions in the pathway alkene biosynthesis; ethylene biosynthesis via S-adenosyl-L-methionine; ethylene from S-adenosyl-L-methionine: step 2/2. The polypeptide is 1-aminocyclopropane-1-carboxylate oxidase (ACO1) (Prunus mume (Japanese apricot)).